A 161-amino-acid polypeptide reads, in one-letter code: Protein-lysine N-methyltransferase (161 aa).

The DxGxGxG SAM-binding motif motif lies at 34 to 40 (DLGCGDG).

The protein belongs to the class I-like SAM-binding methyltransferase superfamily. Monomer.

The catalysed reaction is L-lysyl-[protein] + S-adenosyl-L-methionine = N(6)-methyl-L-lysyl-[protein] + S-adenosyl-L-homocysteine + H(+). Functionally, catalyzes the methylation of lysine residues in target proteins, using S-adenosyl-L-methionine (SAM) as the methyl donor. Exhibits broad substrate specificity, being able to methylate the crenarchaeal chromatin protein Cren7 primarily at 'Lys-11', 'Lys-16' and 'Lys-31', as well as a number of recombinant Sulfolobus proteins in vitro. Methylates lysine residues in a rather sequence-independent manner. This Saccharolobus islandicus (strain REY15A) (Sulfolobus islandicus) protein is Protein-lysine N-methyltransferase.